Consider the following 433-residue polypeptide: MSTAKTLTLEMHLGDLMIGELSFDATADTFAVHYTKDWQQSGFPLSPTIPLDGTGTSNQISMFLVNLLPENKGLDYLIESLGVSKGNTFALIRAIGLDTAGAIAFVPKGALLPETQLRPIKAEEVIQRIEDPTMWPMEIWDGKPRLSVAGVQPKLNLFYNGKEFAFAEGTLSSTHIVKFEKYHHLVINEFITMRLAKVLGMNVANVDIVHFGRYKALCVERFDRRNIPGEQRVLRRHIVDSCQALGFSVSKKYERNFGTGRDVKDIREGVSFNRLFSLAAKCRNPVAAKQDMLQWALFNLLTGNADAHGKNYSFFMTPSGMEPTPWYDLVSVDMYEDFEQQLAMAIDDEFDPNSIYAYQLAAFMDGLGLPRNLLISNLTRIARRIPQAIAEVILMLPPLDEDEASFVAHYKTQLLARCERYLGFVDEVRDVEV.

The residue at position 147 (serine 147) is a Phosphoserine; by autocatalysis. ATP contacts are provided by residues 151–154 (VQPK), lysine 178, and 220–222 (ERF). Aspartate 306 serves as the catalytic Proton acceptor. Residues 308–311 (HGKN) and 327–328 (YD) each bind ATP. 2 consecutive DNA-binding regions follow at residues 380-384 (RIARR) and arginine 429.

It belongs to the HipA Ser/Thr kinase family. As to quaternary structure, monomer. Forms a HipA(2)HipB(2)-DNA complex with cognate antitoxin HipB; has higher affinity for the latter when HipB is prebound to DNA and HipA is phosphorylated. Binds DNA in the ternary complex.

The catalysed reaction is L-seryl-[protein] + ATP = O-phospho-L-seryl-[protein] + ADP + H(+). It carries out the reaction L-threonyl-[protein] + ATP = O-phospho-L-threonyl-[protein] + ADP + H(+). Functionally, toxic component of a type II toxin-antitoxin (TA) system; overexpression in wild-type temporarily inhibits cell growth, overexpression in a hipAB deletion leads to acute growth inhibition. The toxic effect of HipA is neutralized by its cognate antitoxin HipB. In the ternary phosphoserine-HipA-HipB-DNA complex the DNA is bent about 125 degrees; all HipA in the crystallized ternary complex is phosphorylated. In E.coli phosphorylation of HipA is thought to release HipB from the HipA-HipB-DNA complex, suggesting the complex functions differently in the 2 bacteria. Phosphorylates Glu-tRNA-ligase (GltX, on 'Ser-239') in vivo, with HipB probably acts as a corepressor for transcription of the hipBA promoter. The polypeptide is Serine/threonine-protein kinase toxin HipA (Shewanella oneidensis (strain ATCC 700550 / JCM 31522 / CIP 106686 / LMG 19005 / NCIMB 14063 / MR-1)).